We begin with the raw amino-acid sequence, 262 residues long: Acyl-coenzyme A diphosphatase FITM2 (262 aa).

At M1–Y23 the chain is on the cytoplasmic side. Residues L24–L44 traverse the membrane as a helical segment. The Lumenal segment spans residues P45 to N57. A helical membrane pass occupies residues V58 to L78. Residues T79–R93 lie on the Cytoplasmic side of the membrane. The helical transmembrane segment at L94–I114 threads the bilayer. Residues E115–G145 are Lumenal-facing. The helical transmembrane segment at F146–I166 threads the bilayer. H155 is an active-site residue. Residues V167–T190 are Cytoplasmic-facing. Residues L191–V211 traverse the membrane as a helical segment. Topologically, residues Y212–Q218 are lumenal. H214 is an active-site residue. Residues K219–P239 traverse the membrane as a helical segment. Topologically, residues K240–K262 are cytoplasmic.

This sequence belongs to the FIT family. FIT2 subfamily. Widely expressed.

Its subcellular location is the endoplasmic reticulum membrane. The catalysed reaction is an acyl-CoA + H2O = an acyl-4'-phosphopantetheine + adenosine 3',5'-bisphosphate + 2 H(+). The enzyme catalyses (9Z)-octadecenoyl-CoA + H2O = S-(9Z-octadecenoyl)-4'-phosphopantetheine + adenosine 3',5'-bisphosphate + 2 H(+). It carries out the reaction (5Z,8Z,11Z,14Z)-eicosatetraenoyl-CoA + H2O = S-(5Z,8Z,11Z,14Z-eicosatetraenoyl)-4'-phosphopantetheine + adenosine 3',5'-bisphosphate + 2 H(+). It catalyses the reaction hexadecanoyl-CoA + H2O = S-hexadecanoyl-4'-phosphopantetheine + adenosine 3',5'-bisphosphate + 2 H(+). Functionally, fatty acyl-coenzyme A (CoA) diphosphatase that hydrolyzes fatty acyl-CoA to yield acyl-4'-phosphopantetheine and adenosine 3',5'-bisphosphate. Preferentially hydrolyzes unsaturated long-chain acyl-CoA substrates such as oleoyl-CoA/(9Z)-octadecenoyl-CoA and arachidonoyl-CoA/(5Z,8Z,11Z,14Z)-eicosatetraenoyl-CoA in the endoplasmic reticulum (ER) lumen. This catalytic activity is required for maintaining ER structure and for lipid droplets (LDs) biogenesis, which are lipid storage organelles involved in maintaining lipid and energy homeostasis. Directly binds to diacylglycerol (DAGs) and triacylglycerol, which is also important for LD biogenesis. May support directional budding of nacent LDs from the ER into the cytosol by reducing DAG levels at sites of LD formation. Plays a role in the regulation of cell morphology and cytoskeletal organization. This is Acyl-coenzyme A diphosphatase FITM2 from Homo sapiens (Human).